Reading from the N-terminus, the 344-residue chain is Phenylalanine--tRNA ligase alpha subunit (344 aa).

Mg(2+) is bound at residue E255.

This sequence belongs to the class-II aminoacyl-tRNA synthetase family. Phe-tRNA synthetase alpha subunit type 1 subfamily. As to quaternary structure, tetramer of two alpha and two beta subunits. Mg(2+) serves as cofactor.

The protein resides in the cytoplasm. The enzyme catalyses tRNA(Phe) + L-phenylalanine + ATP = L-phenylalanyl-tRNA(Phe) + AMP + diphosphate + H(+). The chain is Phenylalanine--tRNA ligase alpha subunit from Cytophaga hutchinsonii (strain ATCC 33406 / DSM 1761 / CIP 103989 / NBRC 15051 / NCIMB 9469 / D465).